Reading from the N-terminus, the 353-residue chain is Trans-enoyl reductase RAP2 (353 aa).

An NADP(+)-binding site is contributed by 46-49 (CDHK). 131–138 (TGLSTIGM) contributes to the substrate binding site. NADP(+)-binding positions include 189 to 192 (SPRN), Tyr-207, and 254 to 255 (LE). 274–278 (GMALL) serves as a coordination point for substrate. 343–344 (VS) contributes to the NADP(+) binding site.

The protein belongs to the zinc-containing alcohol dehydrogenase family. In terms of assembly, monomer.

It participates in secondary metabolite biosynthesis. Trans-enoyl reductase; part of the gene cluster that mediates the biosynthesis of a tyrosine-derived cytochalasan acting as a fungal signal recognized by resistant rice plants and leads to avirulence in Pi33 resistant rice cultivars. The first step in the pathway is catalyzed by the hybrid PKS-NRPS ACE1, assisted by the enoyl reductase RAP1, that are responsible for fusion of the tyrosine precursor and the polyketide backbone. The polyketide synthase module (PKS) of ACE1 is responsible for the synthesis of the polyketide backbone and the downstream nonribosomal peptide synthetase (NRPS) amidates the carboxyl end of the polyketide with the tyrosine precursor. Because ACE1 lacks a designated enoylreductase (ER) domain, the required activity is provided the enoyl reductase RAP1. Reduction by the hydrolyase ORFZ, followed by dehydration and intra-molecular Diels-Alder cyclization by the Diels-Alderase ORF3 then yield the required isoindolone-fused macrocycle. A number of oxidative steps catalyzed by the tailoring enzymes identified within the cluster, including cytochrome P450 monooxygenases CYP1 to CYP4, the FAD-linked oxidoreductase OXR2 and the short-chain dehydrogenase/reductase OXR1, are further required to afford the final cytochalasans that confer avirulence and which have still to be identified. The monooxygenase CYP1 has been shown to be a site-selective C-18 hydroxylase whereas the function of CYP3 is the site-selective epoxidation of the C-6/C-7 olefin that is present in some intermediate compounds. Finally, SYN2 and RAP2 are not required for avirulence in Pi33 resistant rice cultivars. This Pyricularia oryzae (strain 70-15 / ATCC MYA-4617 / FGSC 8958) (Rice blast fungus) protein is Trans-enoyl reductase RAP2.